A 231-amino-acid chain; its full sequence is MKQYNDLFKIIHREGYIFIASFALVSFLLASFNEKLGCIGCIATAWCIYFFRNPDRFVPISDDLVISPADGIIQEIKEALPPPELGLGDVEMIRVSIFLNIFNVHVNRIPANGKILALHYNPGKFFNASLDKASIYNERQSVLMETAQGQKIVFVQIAGLIARRIVCDLEEGNEVKTGERYGIIRFGSRVDVYLPLKTALLVSKGQTAIGGETIIADFGRKKTTEFKFERK.

S188 serves as the catalytic Schiff-base intermediate with substrate; via pyruvic acid. Position 188 is a pyruvic acid (Ser); by autocatalysis (S188).

It belongs to the phosphatidylserine decarboxylase family. PSD-A subfamily. As to quaternary structure, heterodimer of a large membrane-associated beta subunit and a small pyruvoyl-containing alpha subunit. Requires pyruvate as cofactor. Post-translationally, is synthesized initially as an inactive proenzyme. Formation of the active enzyme involves a self-maturation process in which the active site pyruvoyl group is generated from an internal serine residue via an autocatalytic post-translational modification. Two non-identical subunits are generated from the proenzyme in this reaction, and the pyruvate is formed at the N-terminus of the alpha chain, which is derived from the carboxyl end of the proenzyme. The post-translation cleavage follows an unusual pathway, termed non-hydrolytic serinolysis, in which the side chain hydroxyl group of the serine supplies its oxygen atom to form the C-terminus of the beta chain, while the remainder of the serine residue undergoes an oxidative deamination to produce ammonia and the pyruvoyl prosthetic group on the alpha chain.

The protein localises to the cell membrane. The catalysed reaction is a 1,2-diacyl-sn-glycero-3-phospho-L-serine + H(+) = a 1,2-diacyl-sn-glycero-3-phosphoethanolamine + CO2. Its pathway is phospholipid metabolism; phosphatidylethanolamine biosynthesis; phosphatidylethanolamine from CDP-diacylglycerol: step 2/2. Its function is as follows. Catalyzes the formation of phosphatidylethanolamine (PtdEtn) from phosphatidylserine (PtdSer). This chain is Phosphatidylserine decarboxylase proenzyme, found in Rickettsia africae (strain ESF-5).